A 610-amino-acid chain; its full sequence is MRGHDRINNCLPEELILEIFRRLESKPNRDACSLVCKRWLSLERFSRTTLRIGASFSPDDFISLLSRRFLYITSIHVDERISVSLPSLSPSPKRKRGRDSSSPSSSKRKKLTDKTHSGAENVESSSLTDTGLTALANGFPRIENLSLIWCPNVSSVGLCSLAQKCTSLKSLDLQGCYVGDQGLAAVGKFCKQLEELNLRFCEGLTDVGVIDLVVGCSKSLKSIGVAASAKITDLSLEAVGSHCKLLEVLYLDSEYIHDKGLIAVAQGCHRLKNLKLQCVSVTDVAFAAVGELCTSLERLALYSFQHFTDKGMRAIGKGSKKLKDLTLSDCYFVSCKGLEAIAHGCKELERVEINGCHNIGTRGIEAIGKSCPRLKELALLYCQRIGNSALQEIGKGCKSLEILHLVDCSGIGDIAMCSIAKGCRNLKKLHIRRCYEIGNKGIISIGKHCKSLTELSLRFCDKVGNKALIAIGKGCSLQQLNVSGCNQISDAGITAIARGCPQLTHLDISVLQNIGDMPLAELGEGCPMLKDLVLSHCHHITDNGLNHLVQKCKLLETCHMVYCPGITSAGVATVVSSCPHIKKVLIEKWKVTERTTRRAGSVISYLCMDL.

One can recognise an F-box domain in the interval 5-52 (DRINNCLPEELILEIFRRLESKPNRDACSLVCKRWLSLERFSRTTLRI). LRR repeat units follow at residues 53-79 (GASFSPDDFISLLSRRFLYITSIHVDE), 124-149 (SSSLTDTGLTALANGFPRIENLSLIW), 150-175 (CPNVSSVGLCSLAQKCTSLKSLDLQG), 178-200 (VGDQGLAAVGKFCKQLEELNLRF), 201-227 (CEGLTDVGVIDLVVGCSKSLKSIGVAA), 228-253 (SAKITDLSLEAVGSHCKLLEVLYLDS), 256-277 (IHDKGLIAVAQGCHRLKNLKLQ), 278-303 (CVSVTDVAFAAVGELCTSLERLALYS), 304-329 (FQHFTDKGMRAIGKGSKKLKDLTLSD), 330-355 (CYFVSCKGLEAIAHGCKELERVEING), 356-381 (CHNIGTRGIEAIGKSCPRLKELALLY), 382-407 (CQRIGNSALQEIGKGCKSLEILHLVD), 408-433 (CSGIGDIAMCSIAKGCRNLKKLHIRR), 434-459 (CYEIGNKGIISIGKHCKSLTELSLRF), 460-484 (CDKVGNKALIAIGKGCSLQQLNVSG), 485-510 (CNQISDAGITAIARGCPQLTHLDISV), 511-536 (LQNIGDMPLAELGEGCPMLKDLVLSH), 537-562 (CHHITDNGLNHLVQKCKLLETCHMVY), and 563-588 (CPGITSAGVATVVSSCPHIKKVLIEK). The disordered stretch occupies residues 88–125 (LSPSPKRKRGRDSSSPSSSKRKKLTDKTHSGAENVESS).

The polypeptide is F-box/LRR-repeat protein 4 (FBL4) (Arabidopsis thaliana (Mouse-ear cress)).